The chain runs to 487 residues: Bifunctional cytokinin biosynthesis protein (487 aa).

The interval 1–266 (MESTNRFMIG…RMASDFCYAS (266 aa)) is adenylate isopentenyltransferase. Positions 267–487 (TSISFHPINE…FSRKGELEWV (221 aa)) are cytokinin riboside 5'-monophosphate phosphoribohydrolase. Substrate-binding positions include Glu-352, 380-381 (RK), 403-409 (GYGTLEE), and Thr-415.

In the N-terminal section; belongs to the IPP transferase family. This sequence in the C-terminal section; belongs to the LOG family.

It carries out the reaction dimethylallyl diphosphate + AMP = N(6)-(dimethylallyl)adenosine 5'-phosphate + diphosphate. The enzyme catalyses N(6)-(dimethylallyl)adenosine 5'-phosphate + H2O = N(6)-dimethylallyladenine + D-ribose 5-phosphate. The catalysed reaction is 9-ribosyl-trans-zeatin 5'-phosphate + H2O = trans-zeatin + D-ribose 5-phosphate. Its pathway is secondary metabolite biosynthesis. Bifunctional cytokinin synthesis protein; part of the gene cluster that mediates the biosynthesis of cytokinins such as fusatin, fusatinic acids or 8-oxofusatin, known for their growth promoting and anti-senescence activities toward host plants. FCK1 is a bifunctional enzyme that performs the first steps in the biosynthesis of Fusarium cytokinins. It first condenses adenosine monophosphate (AMP) with dimethylallyl diphosphate (DMAPP) to yield isoprenyl adenosine monophosphate. It then catalyzes the removal of the phosphoribose to produce isopentenylaldehyde. The cytochrome P450 monooxygenase then converts isopentenylaldehyde to trans-zeatin. A condensation step converts trans-zeatin to fusatin which is further modified to produce fusatinic acid. The mechanism for oxidation of fusatin to fusatinic acid remains unknown. 8-oxofusatin could be produced through several pathways, via direct oxygenation of fusatin, or via the 8-oxo-pentenyladenine intermediate which itself must arise from either the prenylation of 8-oxo-AMP by FCK1 and/or oxygenation of isopentenylaldehyde. Both the FCK3 and FCK4 enzymes act downstream of the identified cytokinins to produce yet unidentified compounds. The chain is Bifunctional cytokinin biosynthesis protein from Fusarium pseudograminearum (strain CS3096) (Wheat and barley crown-rot fungus).